We begin with the raw amino-acid sequence, 331 residues long: DNA-directed RNA polymerase subunit alpha (331 aa).

The tract at residues M1–R235 is alpha N-terminal domain (alpha-NTD). The interval Q255 to F331 is alpha C-terminal domain (alpha-CTD).

The protein belongs to the RNA polymerase alpha chain family. In terms of assembly, homodimer. The RNAP catalytic core consists of 2 alpha, 1 beta, 1 beta' and 1 omega subunit. When a sigma factor is associated with the core the holoenzyme is formed, which can initiate transcription.

It carries out the reaction RNA(n) + a ribonucleoside 5'-triphosphate = RNA(n+1) + diphosphate. DNA-dependent RNA polymerase catalyzes the transcription of DNA into RNA using the four ribonucleoside triphosphates as substrates. In Rhodopirellula baltica (strain DSM 10527 / NCIMB 13988 / SH1), this protein is DNA-directed RNA polymerase subunit alpha.